The following is a 1087-amino-acid chain: DNA polymerase II large subunit (1087 aa).

Belongs to the archaeal DNA polymerase II family. Heterodimer of a large subunit and a small subunit.

The enzyme catalyses DNA(n) + a 2'-deoxyribonucleoside 5'-triphosphate = DNA(n+1) + diphosphate. It carries out the reaction Exonucleolytic cleavage in the 3'- to 5'-direction to yield nucleoside 5'-phosphates.. Possesses two activities: a DNA synthesis (polymerase) and an exonucleolytic activity that degrades single-stranded DNA in the 3'- to 5'-direction. Has a template-primer preference which is characteristic of a replicative DNA polymerase. The sequence is that of DNA polymerase II large subunit (polC) from Thermoplasma acidophilum (strain ATCC 25905 / DSM 1728 / JCM 9062 / NBRC 15155 / AMRC-C165).